The chain runs to 388 residues: Succinate--CoA ligase [ADP-forming] subunit beta (388 aa).

Residues 9-244 (KQLFAEYGLP…PSQDDPREAH (236 aa)) form the ATP-grasp domain. ATP contacts are provided by residues lysine 46, 53–55 (GRG), glutamate 99, threonine 102, and glutamate 107. Positions 199 and 213 each coordinate Mg(2+). Substrate is bound by residues asparagine 264 and 321-323 (GIV).

The protein belongs to the succinate/malate CoA ligase beta subunit family. In terms of assembly, heterotetramer of two alpha and two beta subunits. Requires Mg(2+) as cofactor.

The catalysed reaction is succinate + ATP + CoA = succinyl-CoA + ADP + phosphate. The enzyme catalyses GTP + succinate + CoA = succinyl-CoA + GDP + phosphate. The protein operates within carbohydrate metabolism; tricarboxylic acid cycle; succinate from succinyl-CoA (ligase route): step 1/1. Succinyl-CoA synthetase functions in the citric acid cycle (TCA), coupling the hydrolysis of succinyl-CoA to the synthesis of either ATP or GTP and thus represents the only step of substrate-level phosphorylation in the TCA. The beta subunit provides nucleotide specificity of the enzyme and binds the substrate succinate, while the binding sites for coenzyme A and phosphate are found in the alpha subunit. In Aeromonas hydrophila subsp. hydrophila (strain ATCC 7966 / DSM 30187 / BCRC 13018 / CCUG 14551 / JCM 1027 / KCTC 2358 / NCIMB 9240 / NCTC 8049), this protein is Succinate--CoA ligase [ADP-forming] subunit beta.